The primary structure comprises 546 residues: Apolipoprotein N-acyltransferase 1 (546 aa).

Helical transmembrane passes span 14 to 34 (FLLFVLAVSLFALSHPNPLLP), 41 to 61 (AYGALAPLFLLVRWASGFAVV), 62 to 82 (FWGGAYGAFSYGAFSYWLFVF), 85 to 105 (VALCVVAGFSALFLAALCLAL), 122 to 142 (LVWLGYEYAKTLGFLGFPYGV), 151 to 171 (LPLIQVASVFGVWVVSALVVF), and 194 to 214 (FLSAAYSHWVSALVWVGLCGF). Positions 233–502 (AKVALVQPNG…PGVLVADVPI (270 aa)) constitute a CN hydrolase domain. Glu-280 acts as the Proton acceptor in catalysis. Lys-361 is an active-site residue. The active-site Nucleophile is Cys-413. Residues 514–534 (GDALGVFFCVASLFILIAGGV) traverse the membrane as a helical segment.

The protein belongs to the CN hydrolase family. Apolipoprotein N-acyltransferase subfamily.

It localises to the cell inner membrane. It carries out the reaction N-terminal S-1,2-diacyl-sn-glyceryl-L-cysteinyl-[lipoprotein] + a glycerophospholipid = N-acyl-S-1,2-diacyl-sn-glyceryl-L-cysteinyl-[lipoprotein] + a 2-acyl-sn-glycero-3-phospholipid + H(+). It participates in protein modification; lipoprotein biosynthesis (N-acyl transfer). Its function is as follows. Catalyzes the phospholipid dependent N-acylation of the N-terminal cysteine of apolipoprotein, the last step in lipoprotein maturation. The polypeptide is Apolipoprotein N-acyltransferase 1 (Treponema pallidum (strain Nichols)).